The chain runs to 234 residues: MEPSKTFMRNLPITPGYSGFVPFLSCQGMSKEDDMNHCVKTFQEKTQRYKEQLRELCCAVATAPKLKPVNSEETVLQALHQYNLQYHPLILECKYVKKPLQEPPIPGWAGYLPRAKVTEFGCGTRYTVMAKNCYKDFLEITERAKKAHLKPYEEIYGVSSTKTSAPSPKVLQHEELLPKYPDFSIPDGSCPALGRPLREDPKTPLTCGCAQRPSIPCSGKMYLEPLSSAKYAEG.

Microtubule inner protein component of sperm flagellar doublet microtubules. Expressed in testis (at protein level). Strongly expressed in peritubular cells and Leydig cells and weakly expressed in the cytoplasm of spermatocytes.

It is found in the cytoplasm. It localises to the cytoskeleton. The protein localises to the flagellum axoneme. The protein resides in the nucleus. Functionally, microtubule inner protein (MIP) part of the dynein-decorated doublet microtubules (DMTs) in flagellum axoneme. May serve to reinforce and thus stabilize the microtubule structure in the sperm flagella. This is Sperm-associated microtubule inner protein 5 from Homo sapiens (Human).